Here is a 390-residue protein sequence, read N- to C-terminus: 3-ketoacyl-CoA thiolase (390 aa).

Cysteine 95 acts as the Acyl-thioester intermediate in catalysis. Active-site proton acceptor residues include histidine 346 and cysteine 376.

This sequence belongs to the thiolase-like superfamily. Thiolase family. As to quaternary structure, heterotetramer of two alpha chains (FadB) and two beta chains (FadA).

Its subcellular location is the cytoplasm. It catalyses the reaction an acyl-CoA + acetyl-CoA = a 3-oxoacyl-CoA + CoA. The protein operates within lipid metabolism; fatty acid beta-oxidation. In terms of biological role, catalyzes the final step of fatty acid oxidation in which acetyl-CoA is released and the CoA ester of a fatty acid two carbons shorter is formed. In Psychrobacter cryohalolentis (strain ATCC BAA-1226 / DSM 17306 / VKM B-2378 / K5), this protein is 3-ketoacyl-CoA thiolase.